The following is a 415-amino-acid chain: MNSFLKELQEKNLIQDISNIEKIENSLKNKMGIYVGFDPSAKSIHLGNFVVINVLLIAKKHRIPTVALIGGATGGIGDPSGKKSERILIDEDTLKKNTEAIKKQIKHFLPDAKIVNNSDFYKNQSFIDFLRDVGKFIQVSYMLSKEIVKNRLESGISFTEFAYSLIQANDFHYLFKNHNVGIQFGGSDQWGNITTGLELIRKRNGENSFSGGFTIKLLLKSDGTKFGKSEQGAIYLDPSLTSPYTMYQFLLNQNDSDLLNLFNFISDLGIKEILEIITKHSENPEKRYGQKMLANNIVNRIHGKNALNEVENISNILFKNGKINDLSKSEVSIIINSFEVNHVNFSNDEKIIDILDRAKIFKSKNEIRKLIEQKGLVVGAEIITDFDQILKDSNLTHGVIFARQGKKKIFIIKKS.

Residue Tyr34 coordinates L-tyrosine. The short motif at 39-48 (PSAKSIHLGN) is the 'HIGH' region element. L-tyrosine contacts are provided by Tyr163 and Gln167. The short motif at 225–229 (KFGKS) is the 'KMSKS' region element. Lys228 provides a ligand contact to ATP. In terms of domain architecture, S4 RNA-binding spans 349–414 (EKIIDILDRA…GKKKIFIIKK (66 aa)).

Belongs to the class-I aminoacyl-tRNA synthetase family. TyrS type 1 subfamily. As to quaternary structure, homodimer.

The protein resides in the cytoplasm. It catalyses the reaction tRNA(Tyr) + L-tyrosine + ATP = L-tyrosyl-tRNA(Tyr) + AMP + diphosphate + H(+). Catalyzes the attachment of tyrosine to tRNA(Tyr) in a two-step reaction: tyrosine is first activated by ATP to form Tyr-AMP and then transferred to the acceptor end of tRNA(Tyr). The sequence is that of Tyrosine--tRNA ligase from Mycoplasma mobile (strain ATCC 43663 / 163K / NCTC 11711) (Mesomycoplasma mobile).